We begin with the raw amino-acid sequence, 268 residues long: Putative F-box protein At3g23420 (268 aa).

Residues 5-51 (PRDLSDLPRNMAEEVLSRVPMTSLRRLRFTCKKWNTLSRCRSFAKKH) enclose the F-box domain.

The chain is Putative F-box protein At3g23420 from Arabidopsis thaliana (Mouse-ear cress).